A 571-amino-acid polypeptide reads, in one-letter code: CDT1-like protein a, chloroplastic (571 aa).

The N-terminal 79 residues, 1 to 79 (MSTPGSSRSI…GSRRRSEDPV (79 aa)), are a transit peptide targeting the chloroplast. Disordered regions lie at residues 1-110 (MSTP…EKEK) and 288-315 (TTSSLAKPTSSQINIAPTPTKPTSTPAK). The segment covering 22–38 (SPSSKSQTGNPNPSSVA) has biased composition (polar residues). Low complexity predominate over residues 81-96 (SSAKSRLFFDSSSSSP). The span at 288–302 (TTSSLAKPTSSQINI) shows a compositional bias: polar residues. Over residues 303 to 315 (APTPTKPTSTPAK) the composition is skewed to low complexity.

The protein belongs to the Cdt1 family. In terms of assembly, binds to ARC6. In terms of processing, phosphorylated by cyclin D- and cyclin A-containing CDKA-1, and thus targeted to proteasome-mediated proteolysis. As to expression, expressed in proliferating (e.g. shoot and root apical meristems, organ primordia) and endoreplicating cells (e.g. guard cells and stomatal lineage, developing trichomes).

It localises to the plastid. It is found in the chloroplast. In terms of biological role, member of the pre-replication complex. Component of the plastid division machinery. Promotes polyloidization and regulates endoreduplication. Involved in the coordination of cell and plastid division. In Arabidopsis thaliana (Mouse-ear cress), this protein is CDT1-like protein a, chloroplastic (CDT1A).